Consider the following 284-residue polypeptide: Putative ribosome biogenesis protein C306.07c (284 aa).

Positions 264 to 284 (LKKSELRAQKRGSSGEGKGNK) are disordered.

It belongs to the universal ribosomal protein uL1 family. Highly divergent. As to quaternary structure, component of the 90S pre-ribosomes.

It localises to the nucleus. The protein localises to the nucleolus. Functionally, involved in rRNA-processing and ribosome biosynthesis. The chain is Putative ribosome biogenesis protein C306.07c from Schizosaccharomyces pombe (strain 972 / ATCC 24843) (Fission yeast).